Consider the following 153-residue polypeptide: Large ribosomal subunit protein uL22 (153 aa).

The protein belongs to the universal ribosomal protein uL22 family. As to quaternary structure, part of the 50S ribosomal subunit.

In terms of biological role, this protein binds specifically to 23S rRNA. It makes multiple contacts with different domains of the 23S rRNA in the assembled 50S subunit and ribosome. Its function is as follows. The globular domain of the protein is located near the polypeptide exit tunnel on the outside of the subunit, while an extended beta-hairpin is found that lines the wall of the exit tunnel in the center of the 70S ribosome. This chain is Large ribosomal subunit protein uL22, found in Methanococcus maripaludis (strain DSM 14266 / JCM 13030 / NBRC 101832 / S2 / LL).